A 32-amino-acid chain; its full sequence is Trypsin inhibitor 4 (32 aa).

3 disulfides stabilise this stretch: Cys6–Cys23, Cys13–Cys25, and Cys19–Cys31.

It belongs to the protease inhibitor I7 (squash-type serine protease inhibitor) family.

The protein localises to the secreted. Functionally, inhibits trypsin. The chain is Trypsin inhibitor 4 from Cucurbita maxima (Pumpkin).